An 83-amino-acid polypeptide reads, in one-letter code: Conotoxin VnMKLT1-022 (83 aa).

The signal sequence occupies residues 1–22; the sequence is MKLMCMMIVAVLFLTAWTFVTA. Residues 23–55 constitute a propeptide that is removed on maturation; the sequence is DDSINGPENRRIWEKLLSKTRDEMKNPEASKLN. 3 cysteine pairs are disulfide-bonded: Cys-59/Cys-74, Cys-66/Cys-78, and Cys-73/Cys-82.

It belongs to the conotoxin O1 superfamily. Expressed by the venom duct.

It localises to the secreted. The sequence is that of Conotoxin VnMKLT1-022 from Conus ventricosus (Mediterranean cone).